We begin with the raw amino-acid sequence, 244 residues long: Large ribosomal subunit protein uL30 (244 aa).

The protein belongs to the universal ribosomal protein uL30 family.

This chain is Large ribosomal subunit protein uL30 (RPL7), found in Candida glabrata (strain ATCC 2001 / BCRC 20586 / JCM 3761 / NBRC 0622 / NRRL Y-65 / CBS 138) (Yeast).